The sequence spans 400 residues: D-alanyl-D-alanine carboxypeptidase DacC (400 aa).

Residues 1–27 (MTQYSSLLRGLAAGSAFLFLFAPTAFA) form the signal peptide. Serine 66 serves as the catalytic Acyl-ester intermediate. Lysine 69 acts as the Proton acceptor in catalysis. Residue serine 132 is part of the active site. Lysine 235 contacts substrate. The segment at 383 to 400 (VWDFVMMKFHQWFGSWFS) is required for inner membrane binding.

It belongs to the peptidase S11 family.

The protein localises to the cell inner membrane. It catalyses the reaction Preferential cleavage: (Ac)2-L-Lys-D-Ala-|-D-Ala. Also transpeptidation of peptidyl-alanyl moieties that are N-acyl substituents of D-alanine.. It functions in the pathway cell wall biogenesis; peptidoglycan biosynthesis. Removes C-terminal D-alanyl residues from sugar-peptide cell wall precursors. The protein is D-alanyl-D-alanine carboxypeptidase DacC (dacC) of Escherichia coli (strain K12).